A 999-amino-acid chain; its full sequence is Transcription-repair-coupling factor (999 aa).

Residues Asp499 to Leu656 form the Helicase ATP-binding domain. Gly512–Thr519 provides a ligand contact to ATP. A DEEH box motif is present at residues Asp609 to His612. One can recognise a Helicase C-terminal domain in the interval Leu677–Arg833.

It in the N-terminal section; belongs to the UvrB family. In the C-terminal section; belongs to the helicase family. RecG subfamily.

It localises to the cytoplasm. In terms of biological role, couples transcription and DNA repair by recognizing RNA polymerase (RNAP) stalled at DNA lesions. Mediates ATP-dependent release of RNAP and its truncated transcript from the DNA, and recruitment of nucleotide excision repair machinery to the damaged site. This chain is Transcription-repair-coupling factor, found in Helicobacter pylori (strain ATCC 700392 / 26695) (Campylobacter pylori).